Consider the following 340-residue polypeptide: Glyceraldehyde-3-phosphate dehydrogenase (340 aa).

Residues 11-12 (TI) and glycine 109 each bind NAD(+). A disulfide bridge links cysteine 123 with cysteine 149. Position 138 to 140 (138 to 140 (SCN)) interacts with D-glyceraldehyde 3-phosphate. Cysteine 139 functions as the Nucleophile in the catalytic mechanism. Residue arginine 167 participates in NAD(+) binding. Residue 193–194 (HA) coordinates D-glyceraldehyde 3-phosphate. Glutamine 300 contributes to the NAD(+) binding site.

It belongs to the glyceraldehyde-3-phosphate dehydrogenase family. Homotetramer.

It localises to the cytoplasm. It catalyses the reaction D-glyceraldehyde 3-phosphate + phosphate + NADP(+) = (2R)-3-phospho-glyceroyl phosphate + NADPH + H(+). The catalysed reaction is D-glyceraldehyde 3-phosphate + phosphate + NAD(+) = (2R)-3-phospho-glyceroyl phosphate + NADH + H(+). The protein operates within carbohydrate degradation; glycolysis; pyruvate from D-glyceraldehyde 3-phosphate: step 1/5. Its function is as follows. Can use both NAD and NADP as cofactors, but exhibits a marked preference for NADP. The sequence is that of Glyceraldehyde-3-phosphate dehydrogenase (gap) from Saccharolobus solfataricus (strain ATCC 35092 / DSM 1617 / JCM 11322 / P2) (Sulfolobus solfataricus).